Here is a 366-residue protein sequence, read N- to C-terminus: GTP cyclohydrolase 1 type 2 homolog (366 aa).

Zn(2+) is bound by residues histidine 64, histidine 65, aspartate 102, histidine 326, and glutamate 329.

The protein belongs to the GTP cyclohydrolase I type 2/NIF3 family. As to quaternary structure, toroid-shaped homohexamer that has a central cavity of about 38 Angstroms diameter.

The chain is GTP cyclohydrolase 1 type 2 homolog from Staphylococcus aureus (strain Mu50 / ATCC 700699).